Here is a 663-residue protein sequence, read N- to C-terminus: Protein MICRORCHIDIA 6 (663 aa).

A disordered region spans residues 1–77 (MSHDRSVNVS…PADDAGVTSS (77 aa)). A compositionally biased stretch (polar residues) spans 49–62 (SVGQSAGQSSTSVV). Positions 552 to 559 (KRKEHPDS) match the Nuclear localization signal motif. Residues 614 to 659 (DRKVRSQNLEVKAMNLRSELENYKSEYERLMVELQALDLVKDEHRR) are a coiled coil.

This sequence belongs to the MORC ATPase protein family. In terms of assembly, homodimer and heterodimers with MORC1/CRT1 and MORC2. Interacts directly with SUVH9. Component of an RNA-directed DNA methylation (RdDM) complex that contains at least MORC6, MORC1/CRT1, MORC2, SWI3D and SUVH9. Stimulated by interaction with DMS3. Interacts with IDN2, SWI3B, SWI3C and SWI3D. Mg(2+) serves as cofactor. The cofactor is Mn(2+).

The protein resides in the nucleus. With respect to regulation, stimulated by DMS3. In terms of biological role, involved in RNA-directed DNA methylation (RdDM) as a component of the RdDM machinery and required for gene silencing. Together with SUVH2 and SUVH9, regulates the silencing of some transposable elements (TEs). Exhibits ATPase activity. May also be involved in the regulation of chromatin architecture/condensation to maintain gene silencing. Binds DNA/RNA in a non-specific manner and exhibits endonuclease activity. Probably involved in DNA repair. Positive regulator of defense against the oomycete Hyaloperonospora arabidopsidis (Hpa). The polypeptide is Protein MICRORCHIDIA 6 (Arabidopsis thaliana (Mouse-ear cress)).